A 245-amino-acid chain; its full sequence is LSIRVLLHKLLILLQVTLSVVVGKTMMILFPDTTKRYILKLGEKSRMNQNPKFSYENWGPTFFSFQYLLFVLKVKWRRLEDEAHEGRPAPNTPVVALNGEMQHLFSFMRDNRPLILNFGSCTUPSFMLKFDEFNKLVKDFSSIADFLIIYIEEAHAVDGWAFRNNVVIKNHRSLEDRKTAAQFLQQKNPLCPVVLDTMENLSSSKYAALPERLYILQAGNVIYKGGVGPWNYHPQEIRAVLEKLK.

Residues 1–9 (LSIRVLLHK) are Extracellular-facing. A helical; Signal-anchor for type III membrane protein membrane pass occupies residues 10-30 (LLILLQVTLSVVVGKTMMILF). Topologically, residues 31–245 (PDTTKRYILK…EIRAVLEKLK (215 aa)) are cytoplasmic. Selenocysteine 123 is a catalytic residue. A non-standard amino acid (selenocysteine) is located at residue selenocysteine 123.

The protein belongs to the iodothyronine deiodinase family. In terms of assembly, predominantly monomer. Can form homodimers but homodimerization is not essential for enzyme activity.

Its subcellular location is the cell membrane. It localises to the endoplasmic reticulum membrane. The protein localises to the basolateral cell membrane. The catalysed reaction is 3,3',5-triiodo-L-thyronine + iodide + A + H(+) = L-thyroxine + AH2. The enzyme catalyses 3,3',5'-triiodo-L-thyronine + iodide + A + H(+) = L-thyroxine + AH2. It catalyses the reaction 3,3'-diiodo-L-thyronine + iodide + A + H(+) = 3,3',5'-triiodo-L-thyronine + AH2. It carries out the reaction 3,3'-diiodo-L-thyronine + iodide + A + H(+) = 3,3',5-triiodo-L-thyronine + AH2. The catalysed reaction is 3'-iodo-L-thyronine + iodide + A + H(+) = 3',5'-diiodo-L-thyronine + AH2. The enzyme catalyses 3-iodo-L-thyronine + iodide + A + H(+) = 3,5-diiodo-L-thyronine + AH2. It catalyses the reaction 3-iodo-L-thyronine + iodide + A + H(+) = 3,3'-diiodo-L-thyronine + AH2. It carries out the reaction 3,3'-diiodothyronamine + iodide + A + H(+) = 3,3',5'-triiodothyronamine + AH2. The catalysed reaction is 3'-iodothyronamine + iodide + A + H(+) = 3',5'-diiodothyronamine + AH2. The enzyme catalyses 3-iodothyronamine + iodide + A + H(+) = 3,3'-diiodothyronamine + AH2. It catalyses the reaction 3,3'-diiodothyronamine + iodide + A + H(+) = 3,3',5-triiodothyronamine + AH2. It carries out the reaction 3-iodothyronamine + iodide + A + H(+) = 3,5-diiodothyronamine + AH2. The catalysed reaction is 3,3'-diiodo-L-thyronine sulfate + iodide + A + H(+) = 3,3',5'-triiodo-L-thyronine sulfate + AH2. The enzyme catalyses 3,3',5'-triiodo-L-thyronine sulfate + iodide + A + H(+) = L-thyroxine sulfate + AH2. It catalyses the reaction 3,3'-diiodo-L-thyronine sulfate + iodide + A + H(+) = 3,3',5-triiodo-L-thyronine sulfate + AH2. Functionally, plays a crucial role in the metabolism of thyroid hormones (TH) and has specific roles in TH activation and inactivation by deiodination. Catalyzes the deiodiantion of L-thyroxine (T4) to 3,5,3'-triiodothyronine (T3) and 3,3',5'-triiodothyronine (rT3) to 3,3'-diiodothyronine (3,3'-T2) via outer-ring deiodination (ORD). Catalyzes the deiodiantion of T4 to rT3, T3 to 3,3'-T2, 3,5-diiodothyronine (3,5-T2) to 3-monoiodothyronine (3-T1) and 3,3'-T2 to 3-T1 via inner-ring deiodination (IRD). Catalyzes the deiodiantion of 3',5'-diiodothyronine (3',5'-T2) to 3'-monoiodothyronine (3'-T1) via ORD. Catalyzes the phenolic ring deiodinations of 3,3',5'-triiodothyronamine, 3',5'-diiodothyronamine and 3,3'-diiodothyronamine as well as tyrosyl ring deiodinations of 3,5,3'-triiodothyronamine and 3,5-diiodothyronamine. Catalyzes the deiodination of L-thyroxine sulfate and 3,3',5-triiodo-L-thyronine sulfate via IRD and of 3,3',5'-triiodo-L-thyronine sulfate via ORD. This Gallus gallus (Chicken) protein is Type I iodothyronine deiodinase (DIO1).